A 1509-amino-acid chain; its full sequence is DNA-directed RNA polymerase subunit beta' (1509 aa).

The Zn(2+) site is built by C75, C77, C90, and C93. Mg(2+) is bound by residues D474, D476, and D478. Positions 804, 878, 885, and 888 each coordinate Zn(2+).

This sequence belongs to the RNA polymerase beta' chain family. As to quaternary structure, the RNAP catalytic core consists of 2 alpha, 1 beta, 1 beta' and 1 omega subunit. When a sigma factor is associated with the core the holoenzyme is formed, which can initiate transcription. Requires Mg(2+) as cofactor. Zn(2+) is required as a cofactor.

The enzyme catalyses RNA(n) + a ribonucleoside 5'-triphosphate = RNA(n+1) + diphosphate. In terms of biological role, DNA-dependent RNA polymerase catalyzes the transcription of DNA into RNA using the four ribonucleoside triphosphates as substrates. This chain is DNA-directed RNA polymerase subunit beta', found in Sulfurovum sp. (strain NBC37-1).